Consider the following 360-residue polypeptide: Josephin-like protein (360 aa).

The Josephin domain maps to 5–192 (ESKIYHERQR…NQLPLASNYR (188 aa)). Catalysis depends on Cys-18, which acts as the Nucleophile. The active-site Proton acceptor is the His-129.

It carries out the reaction Thiol-dependent hydrolysis of ester, thioester, amide, peptide and isopeptide bonds formed by the C-terminal Gly of ubiquitin (a 76-residue protein attached to proteins as an intracellular targeting signal).. Its function is as follows. May act as a deubiquitinating enzyme. This chain is Josephin-like protein, found in Arabidopsis thaliana (Mouse-ear cress).